The primary structure comprises 106 residues: Urease subunit beta (106 aa).

Belongs to the urease beta subunit family. In terms of assembly, heterotrimer of UreA (gamma), UreB (beta) and UreC (alpha) subunits. Three heterotrimers associate to form the active enzyme.

It localises to the cytoplasm. It carries out the reaction urea + 2 H2O + H(+) = hydrogencarbonate + 2 NH4(+). It participates in nitrogen metabolism; urea degradation; CO(2) and NH(3) from urea (urease route): step 1/1. This Synechococcus sp. (strain CC9902) protein is Urease subunit beta.